A 259-amino-acid chain; its full sequence is Global transcriptional regulator CodY (259 aa).

The tract at residues 1-155 is GAF domain; it reads MELLAKTRKL…SSTVVGMEIL (155 aa). A DNA-binding region (H-T-H motif) is located at residues 203-222; it reads ASKIADRVGITRSVIVNALR. S215 is subject to Phosphoserine.

It belongs to the CodY family.

The protein resides in the cytoplasm. Its function is as follows. DNA-binding global transcriptional regulator which is involved in the adaptive response to starvation and acts by directly or indirectly controlling the expression of numerous genes in response to nutrient availability. During rapid exponential growth, CodY is highly active and represses genes whose products allow adaptation to nutrient depletion. This chain is Global transcriptional regulator CodY, found in Bacillus anthracis (strain A0248).